We begin with the raw amino-acid sequence, 385 residues long: Calcium/calmodulin-dependent protein kinase type 1D (385 aa).

The region spanning 23 to 279 (FEFKETLGTG…CEQAARHPWI (257 aa)) is the Protein kinase domain. ATP is bound by residues 29-37 (LGTGAFSEV) and Lys-52. Lys-113 participates in a covalent cross-link: Glycyl lysine isopeptide (Lys-Gly) (interchain with G-Cter in SUMO2). Ser-122 is modified (phosphoserine). Catalysis depends on Asp-144, which acts as the Proton acceptor. Thr-180 is modified (phosphothreonine; by CaMKK1 and CaMKK2). Positions 279–319 (IAGDTALNKNIHESVSAQIRKNFAKSKWRQAFNATAVVRHM) are autoinhibitory domain. The calmodulin-binding stretch occupies residues 299-320 (KNFAKSKWRQAFNATAVVRHMR). A Nuclear export signal motif is present at residues 318–324 (HMRKLHL). The tract at residues 360 to 385 (SSGVSGVGAERRPRPTTVTAVHSGSK) is disordered. The segment covering 375–385 (TTVTAVHSGSK) has biased composition (polar residues).

The protein belongs to the protein kinase superfamily. CAMK Ser/Thr protein kinase family. CaMK subfamily. In terms of tissue distribution, widely expressed. Highly and mostly expressed in polymorphonuclear leukocytes (neutrophilic and eosinophilic granulocytes) while little or no expression is observed in monocytes and lymphocytes.

The protein localises to the cytoplasm. Its subcellular location is the nucleus. It carries out the reaction L-seryl-[protein] + ATP = O-phospho-L-seryl-[protein] + ADP + H(+). It catalyses the reaction L-threonyl-[protein] + ATP = O-phospho-L-threonyl-[protein] + ADP + H(+). Its activity is regulated as follows. Activated by Ca(2+)/calmodulin. Binding of calmodulin results in conformational change that relieves intrasteric autoinhibition and allows phosphorylation of Thr-180 within the activation loop by CaMKK1 or CaMKK2. Phosphorylation of Thr-180 results in several fold increase in total activity. Unlike CaMK4, may be unable to exhibit autonomous activity after Ca(2+)/calmodulin activation. Calcium/calmodulin-dependent protein kinase that operates in the calcium-triggered CaMKK-CaMK1 signaling cascade and, upon calcium influx, activates CREB-dependent gene transcription, regulates calcium-mediated granulocyte function and respiratory burst and promotes basal dendritic growth of hippocampal neurons. In neutrophil cells, required for cytokine-induced proliferative responses and activation of the respiratory burst. Activates the transcription factor CREB1 in hippocampal neuron nuclei. May play a role in apoptosis of erythroleukemia cells. In vitro, phosphorylates transcription factor CREM isoform Beta. The sequence is that of Calcium/calmodulin-dependent protein kinase type 1D (CAMK1D) from Homo sapiens (Human).